Consider the following 227-residue polypeptide: C4-dicarboxylate TRAP transporter small permease protein DctQ (227 aa).

Residues 1–7 (MLRILDR) are Cytoplasmic-facing. Residues 8-28 (AEEVLIAALIATATVLIFVSV) traverse the membrane as a helical segment. The Periplasmic portion of the chain corresponds to 29 to 67 (THRFTLGFVADFVGFFRGHGMTGAAAAAKSLYTTLRGIN). A helical transmembrane segment spans residues 68 to 88 (LVWAQELCIILFVWMAKFGAA). At 89 to 112 (YGVRTGIHVGIDVLINRLDAPKRR) the chain is on the cytoplasmic side. The chain crosses the membrane as a helical span at residues 113–133 (FFILLGLGAGALFTGIIATLG). Topologically, residues 134–149 (ANFVLHMYHASSTSPD) are periplasmic. A helical transmembrane segment spans residues 150–170 (LELPMWLVYLAIPMGSSLMCF). Over 171–227 (RFLQVAFGFARTGELPHHDHGHVDGVDTENEGIDAEGDVLLHSPLTPRDLVEKPKDN) the chain is Cytoplasmic.

This sequence belongs to the TRAP transporter small permease family. As to quaternary structure, the complex comprises the extracytoplasmic solute receptor protein DctP, and the two transmembrane proteins DctQ and DctM.

The protein localises to the cell inner membrane. Its function is as follows. Part of the tripartite ATP-independent periplasmic (TRAP) transport system DctPQM involved in C4-dicarboxylates uptake. The polypeptide is C4-dicarboxylate TRAP transporter small permease protein DctQ (Rhodobacter capsulatus (Rhodopseudomonas capsulata)).